Reading from the N-terminus, the 273-residue chain is Large ribosomal subunit protein uL2cy (273 aa).

Disordered stretches follow at residues 1-27 and 224-273; these read MAIH…SNPR and NPVD…RRRK.

The protein belongs to the universal ribosomal protein uL2 family. Part of the 50S ribosomal subunit.

The protein localises to the plastid. It is found in the chloroplast. The chain is Large ribosomal subunit protein uL2cy (rpl2-B) from Liriodendron tulipifera (Tuliptree).